The chain runs to 284 residues: Phosphoenolpyruvate guanylyltransferase (284 aa).

The segment at 94-123 (ADLSADEPAGTDAERRADPSAENRASTSAQ) is disordered. A compositionally biased stretch (basic and acidic residues) spans 105-114 (DAERRADPSA). Threonine 203, glycine 219, and serine 222 together coordinate phosphoenolpyruvate.

It belongs to the CofC family.

The catalysed reaction is phosphoenolpyruvate + GTP + H(+) = enolpyruvoyl-2-diphospho-5'-guanosine + diphosphate. The protein operates within cofactor biosynthesis; coenzyme F420 biosynthesis. In terms of biological role, guanylyltransferase that catalyzes the activation of phosphoenolpyruvate (PEP) as enolpyruvoyl-2-diphospho-5'-guanosine, via the condensation of PEP with GTP. It is involved in the biosynthesis of coenzyme F420, a hydride carrier cofactor. This Sanguibacter keddieii (strain ATCC 51767 / DSM 10542 / NCFB 3025 / ST-74) protein is Phosphoenolpyruvate guanylyltransferase.